The sequence spans 746 residues: UvrABC system protein C (746 aa).

The GIY-YIG domain occupies 18 to 97 (AKPGVYKWRD…IKEFDPRFNV (80 aa)). One can recognise a UVR domain in the interval 211 to 246 (RPYIAQLTRDMKEASAELEFEKAARLRDQIQMLETV). A disordered region spans residues 557-577 (ANGNDNGEGGSDISGKGHAVP).

The protein belongs to the UvrC family. In terms of assembly, interacts with UvrB in an incision complex.

The protein resides in the cytoplasm. The UvrABC repair system catalyzes the recognition and processing of DNA lesions. UvrC both incises the 5' and 3' sides of the lesion. The N-terminal half is responsible for the 3' incision and the C-terminal half is responsible for the 5' incision. The sequence is that of UvrABC system protein C from Bifidobacterium longum (strain NCC 2705).